The sequence spans 218 residues: Mitochondrial import inner membrane translocase subunit TIM17-1 (218 aa).

A run of 4 helical transmembrane segments spans residues 19–36 (VGGA…YHLI), 66–82 (FSVW…ALVY), 89–105 (PWNS…FLSL), and 116–133 (ALVG…GIML).

Belongs to the Tim17/Tim22/Tim23 family. In terms of assembly, component of the TIM17:23 complex at least composed of TIM23, TIM17 and TIM50. The complex interacts with the TIM44 component of the PAM complex. Expressed in flowers, leaves and cotyledons, and at very low levels in roots.

Its subcellular location is the mitochondrion inner membrane. Functionally, essential component of the TIM17:23 complex, a complex that mediates the translocation of transit peptide-containing proteins across the mitochondrial inner membrane. Links the inner and outer membranes. The chain is Mitochondrial import inner membrane translocase subunit TIM17-1 (TIM17-1) from Arabidopsis thaliana (Mouse-ear cress).